We begin with the raw amino-acid sequence, 337 residues long: L-Ala-D/L-amino acid epimerase (337 aa).

Residues T129 and 151-153 (KIK) contribute to the substrate site. Mg(2+) contacts are provided by D177, E203, and D228. Residues K250 and 300-302 (DMD) each bind substrate.

The protein belongs to the mandelate racemase/muconate lactonizing enzyme family. It depends on Mg(2+) as a cofactor.

Broad specificity dipeptide epimerase. Catalyzes the epimerization of L-Ala-L-Ala, L-Ala-L-Glu, L-Ala-L-Ser, L-Ala-L-Thr and L-Ala-L-Met (in vitro). The sequence is that of L-Ala-D/L-amino acid epimerase from Maribacter sp. (strain HTCC2170 / KCCM 42371).